Consider the following 473-residue polypeptide: ATP synthase subunit beta (473 aa).

158–165 (GGAGVGKT) contributes to the ATP binding site.

The protein belongs to the ATPase alpha/beta chains family. In terms of assembly, F-type ATPases have 2 components, CF(1) - the catalytic core - and CF(0) - the membrane proton channel. CF(1) has five subunits: alpha(3), beta(3), gamma(1), delta(1), epsilon(1). CF(0) has three main subunits: a(1), b(2) and c(9-12). The alpha and beta chains form an alternating ring which encloses part of the gamma chain. CF(1) is attached to CF(0) by a central stalk formed by the gamma and epsilon chains, while a peripheral stalk is formed by the delta and b chains.

The protein resides in the cell membrane. The catalysed reaction is ATP + H2O + 4 H(+)(in) = ADP + phosphate + 5 H(+)(out). Its function is as follows. Produces ATP from ADP in the presence of a proton gradient across the membrane. The catalytic sites are hosted primarily by the beta subunits. In Bacillus pumilus (strain SAFR-032), this protein is ATP synthase subunit beta.